A 181-amino-acid chain; its full sequence is Probable N-acetyltransferase YjcK (181 aa).

Positions 7–172 (IYVRPLEVTD…NGVWEDHQVL (166 aa)) constitute an N-acetyltransferase domain.

The protein belongs to the acetyltransferase family. RimJ subfamily.

It carries out the reaction an N-terminal L-alpha-aminoacyl-[protein] + acetyl-CoA = N-terminal N(alpha)-acetyl-L-alpha-aminoacyl-[protein] + CoA + H(+). Probable N-terminal protein acetyltransferase. The sequence is that of Probable N-acetyltransferase YjcK (yjcK) from Bacillus subtilis (strain 168).